The sequence spans 238 residues: LexA repressor (238 aa).

The H-T-H motif DNA-binding region spans phenylalanine 26 to threonine 46. Active-site for autocatalytic cleavage activity residues include serine 158 and lysine 196.

The protein belongs to the peptidase S24 family. Homodimer.

The enzyme catalyses Hydrolysis of Ala-|-Gly bond in repressor LexA.. Its function is as follows. Represses a number of genes involved in the response to DNA damage (SOS response), including recA and lexA. In the presence of single-stranded DNA, RecA interacts with LexA causing an autocatalytic cleavage which disrupts the DNA-binding part of LexA, leading to derepression of the SOS regulon and eventually DNA repair. This chain is LexA repressor, found in Sinorhizobium medicae (strain WSM419) (Ensifer medicae).